We begin with the raw amino-acid sequence, 372 residues long: Uroporphyrinogen decarboxylase (372 aa).

Substrate is bound by residues 35 to 39, Asp-85, Tyr-166, Ser-221, and His-342; that span reads RQAGR.

The protein belongs to the uroporphyrinogen decarboxylase family. As to quaternary structure, homodimer.

The protein localises to the cytoplasm. It carries out the reaction uroporphyrinogen III + 4 H(+) = coproporphyrinogen III + 4 CO2. Its pathway is porphyrin-containing compound metabolism; protoporphyrin-IX biosynthesis; coproporphyrinogen-III from 5-aminolevulinate: step 4/4. In terms of biological role, catalyzes the decarboxylation of four acetate groups of uroporphyrinogen-III to yield coproporphyrinogen-III. This Methylibium petroleiphilum (strain ATCC BAA-1232 / LMG 22953 / PM1) protein is Uroporphyrinogen decarboxylase.